The chain runs to 83 residues: Alpha-conotoxin QcIA (83 aa).

The N-terminal stretch at 1–21 is a signal peptide; the sequence is MGMRMMFTLFLLAVLSTTVVS. Positions 22–48 are excised as a propeptide; that stretch reads FTLDRASNGRDAAADSKAADQIAQTVR. Intrachain disulfides connect Cys51-Cys57 and Cys52-Cys65. The tract at residues 53 to 55 is ser-Xaa-Pro motif, crucial for potent interaction with nAChR; sequence SNP. A propeptide spanning residues 66–83 is cleaved from the precursor; sequence RRTLMLQNPLNHDMSPSA.

It belongs to the conotoxin A superfamily. In terms of tissue distribution, expressed by the venom duct.

It is found in the secreted. Its function is as follows. Alpha-conotoxins bind to the nicotinic acetylcholine receptors (nAChR) and inhibit them. A synthetic amidated version of this toxin potently and preferentially antagonizes neuronal rat alpha-3-beta-2 (IC(50)=55.7 nM) and alpha-6/alpha-3-beta-4 (IC(50)=90.69 nM) nAChRs. The chain is Alpha-conotoxin QcIA from Conus quercinus (Oak cone).